The sequence spans 702 residues: Ribosomal RNA large subunit methyltransferase K/L (702 aa).

The region spanning 43–154 is the THUMP domain; sequence LVYQSLMWSR…KETASIALDL (112 aa).

The protein belongs to the methyltransferase superfamily. RlmKL family.

The protein localises to the cytoplasm. The catalysed reaction is guanosine(2445) in 23S rRNA + S-adenosyl-L-methionine = N(2)-methylguanosine(2445) in 23S rRNA + S-adenosyl-L-homocysteine + H(+). It catalyses the reaction guanosine(2069) in 23S rRNA + S-adenosyl-L-methionine = N(2)-methylguanosine(2069) in 23S rRNA + S-adenosyl-L-homocysteine + H(+). Its function is as follows. Specifically methylates the guanine in position 2445 (m2G2445) and the guanine in position 2069 (m7G2069) of 23S rRNA. This chain is Ribosomal RNA large subunit methyltransferase K/L, found in Escherichia coli O6:K15:H31 (strain 536 / UPEC).